The chain runs to 251 residues: Flap endonuclease Xni (251 aa).

Asp-104 serves as a coordination point for Mg(2+). Residues 160-249 form the 5'-3' exonuclease domain; the sequence is VQPQQLPDYW…IDGNLQQLRL (90 aa). Residues Leu-171, Ala-172, Pro-180, Val-182, and Ile-185 each coordinate K(+). The tract at residues 184–189 is interaction with DNA; that stretch reads GIGPKS.

It belongs to the Xni family. Mg(2+) is required as a cofactor. The cofactor is K(+).

Has flap endonuclease activity. During DNA replication, flap endonucleases cleave the 5'-overhanging flap structure that is generated by displacement synthesis when DNA polymerase encounters the 5'-end of a downstream Okazaki fragment. The polypeptide is Flap endonuclease Xni (Escherichia coli O7:K1 (strain IAI39 / ExPEC)).